A 434-amino-acid polypeptide reads, in one-letter code: ATP-dependent RNA helicase RhlB (434 aa).

The Q motif motif lies at 9-37 (QKFADLGLEPQVLDGLNAKGFINCTPIQA). The region spanning 40-219 (LPVLLAGQDI…FEHMQEPEHV (180 aa)) is the Helicase ATP-binding domain. Position 53–60 (53–60 (AQTGTGKT)) interacts with ATP. The short motif at 165-168 (DEAD) is the DEAD box element. In terms of domain architecture, Helicase C-terminal spans 245–390 (ALLQTLIEEE…QSDYDTSALL (146 aa)). The interval 394–434 (PAPIRLQRRPPQNRRNGSNNGQRQSGNRKHSRPRPPRSPQA) is disordered. Residues 406–418 (NRRNGSNNGQRQS) are compositionally biased toward low complexity. Positions 419–428 (GNRKHSRPRP) are enriched in basic residues.

Belongs to the DEAD box helicase family. RhlB subfamily. Component of the RNA degradosome, which is a multiprotein complex involved in RNA processing and mRNA degradation.

Its subcellular location is the cytoplasm. It carries out the reaction ATP + H2O = ADP + phosphate + H(+). In terms of biological role, DEAD-box RNA helicase involved in RNA degradation. Has RNA-dependent ATPase activity and unwinds double-stranded RNA. The sequence is that of ATP-dependent RNA helicase RhlB from Aliivibrio salmonicida (strain LFI1238) (Vibrio salmonicida (strain LFI1238)).